The primary structure comprises 440 residues: Xylose isomerase (440 aa).

Active-site residues include histidine 100 and aspartate 103. Mg(2+) is bound by residues glutamate 231, glutamate 267, histidine 270, aspartate 295, aspartate 306, aspartate 308, and aspartate 338.

It belongs to the xylose isomerase family. Homotetramer. The cofactor is Mg(2+).

Its subcellular location is the cytoplasm. The enzyme catalyses alpha-D-xylose = alpha-D-xylulofuranose. This Burkholderia multivorans (strain ATCC 17616 / 249) protein is Xylose isomerase.